We begin with the raw amino-acid sequence, 105 residues long: Large ribosomal subunit protein bL21 (105 aa).

This sequence belongs to the bacterial ribosomal protein bL21 family. Part of the 50S ribosomal subunit. Contacts protein L20.

Its function is as follows. This protein binds to 23S rRNA in the presence of protein L20. The polypeptide is Large ribosomal subunit protein bL21 (Dictyoglomus thermophilum (strain ATCC 35947 / DSM 3960 / H-6-12)).